Here is a 251-residue protein sequence, read N- to C-terminus: Large ribosomal subunit protein uL3 (251 aa).

Glutamine 151 is subject to N5-methylglutamine. A disordered region spans residues 214-251 (KDAPFPAGLKSAANSNSAPTETPAEEVAAPEATEGQEG). Positions 231-251 (APTETPAEEVAAPEATEGQEG) are enriched in low complexity.

This sequence belongs to the universal ribosomal protein uL3 family. As to quaternary structure, part of the 50S ribosomal subunit. Forms a cluster with proteins L14 and L19. In terms of processing, methylated by PrmB.

Its function is as follows. One of the primary rRNA binding proteins, it binds directly near the 3'-end of the 23S rRNA, where it nucleates assembly of the 50S subunit. This Rhizorhabdus wittichii (strain DSM 6014 / CCUG 31198 / JCM 15750 / NBRC 105917 / EY 4224 / RW1) (Sphingomonas wittichii) protein is Large ribosomal subunit protein uL3.